The sequence spans 596 residues: Arginine--tRNA ligase (596 aa).

The 'HIGH' region signature appears at 139-149 (ANPTGPLHVGH).

The protein belongs to the class-I aminoacyl-tRNA synthetase family. In terms of assembly, monomer.

The protein localises to the cytoplasm. It catalyses the reaction tRNA(Arg) + L-arginine + ATP = L-arginyl-tRNA(Arg) + AMP + diphosphate. The polypeptide is Arginine--tRNA ligase (Paraburkholderia phytofirmans (strain DSM 17436 / LMG 22146 / PsJN) (Burkholderia phytofirmans)).